Consider the following 239-residue polypeptide: ATP-dependent dethiobiotin synthetase BioD (239 aa).

15-20 serves as a coordination point for ATP; it reads EIGKTF. Threonine 19 provides a ligand contact to Mg(2+). Residue lysine 40 is part of the active site. Residues aspartate 57, 118–121, and 178–179 contribute to the ATP site; these read EGVG and NH. Residues aspartate 57 and glutamate 118 each contribute to the Mg(2+) site.

Belongs to the dethiobiotin synthetase family. In terms of assembly, homodimer. The cofactor is Mg(2+).

The protein resides in the cytoplasm. The enzyme catalyses (7R,8S)-7,8-diammoniononanoate + CO2 + ATP = (4R,5S)-dethiobiotin + ADP + phosphate + 3 H(+). Its pathway is cofactor biosynthesis; biotin biosynthesis; biotin from 7,8-diaminononanoate: step 1/2. Its function is as follows. Catalyzes a mechanistically unusual reaction, the ATP-dependent insertion of CO2 between the N7 and N8 nitrogen atoms of 7,8-diaminopelargonic acid (DAPA, also called 7,8-diammoniononanoate) to form a ureido ring. This Burkholderia ambifaria (strain ATCC BAA-244 / DSM 16087 / CCUG 44356 / LMG 19182 / AMMD) (Burkholderia cepacia (strain AMMD)) protein is ATP-dependent dethiobiotin synthetase BioD.